The primary structure comprises 1657 residues: Thrombospondin type-1 domain-containing protein 7A (1657 aa).

Positions 1-47 (MGLQARRWASGSRGAAGPRRGVLQLLPLPLPLPLLLLLLLRPGAGRA) are cleaved as a signal peptide. The Extracellular segment spans residues 48-1607 (AAQGEAEAPT…FGPDGRLKTW (1560 aa)). TSP type-1 domains are found at residues 57 to 116 (TLYL…KVCD), 120 to 192 (ELYD…IPCQ), and 194 to 247 (DCIV…SPCE). N234 is a glycosylation site (N-linked (GlcNAc...) asparagine). The interval 265-311 (MPHSRQVRQARRRGKNKEREKDRSKGVKDPEARELIKKKRNRNRQNR) is disordered. The stretch at 267 to 315 (HSRQVRQARRRGKNKEREKDRSKGVKDPEARELIKKKRNRNRQNRQENK) forms a coiled coil. Positions 269-280 (RQVRQARRRGKN) are enriched in basic residues. Positions 281–299 (KEREKDRSKGVKDPEAREL) are enriched in basic and acidic residues. Residues 300–309 (IKKKRNRNRQ) show a composition bias toward basic residues. N332 carries N-linked (GlcNAc...) asparagine glycosylation. 16 consecutive TSP type-1 domains span residues 360–416 (ECQV…LSQG), 423–510 (ATYG…IPCP), 512–574 (ECEV…PACY), 634–695 (DCVL…HPCT), 696–769 (VYHW…LPCK), 771–831 (DCIV…QACQ), 832–904 (SYRW…IPCQ), 906–959 (DCQL…CPCD), 960–1033 (KYNA…IPCP), 1035–1095 (DCKL…SDCN), 1096–1163 (QYLW…LPCP), 1166–1220 (CVIS…KNCY), 1221–1284 (HYDY…VECP), 1286–1341 (NCQL…KPCY), 1342–1412 (RWQY…QPCP), and 1414–1475 (DCYL…GQCY). Intrachain disulfides connect C435–C505, C455–C509, and C466–C494. N450 carries an N-linked (GlcNAc...) asparagine glycan. N500 is a glycosylation site (N-linked (GlcNAc...) asparagine). 2 cysteine pairs are disulfide-bonded: C635–C677 and C646–C650. N679 carries N-linked (GlcNAc...) asparagine glycosylation. 7 disulfides stabilise this stretch: C689-C694, C707-C764, C728-C768, C739-C752, C772-C814, C783-C787, and C824-C830. An N-linked (GlcNAc...) asparagine glycan is attached at N717. The N-linked (GlcNAc...) asparagine glycan is linked to N968. 6 disulfide bridges follow: C972-C1028, C994-C1032, C1005-C1018, C1036-C1073, C1047-C1051, and C1090-C1094. Residue N1043 is glycosylated (N-linked (GlcNAc...) asparagine). N1182 is a glycosylation site (N-linked (GlcNAc...) asparagine). An intrachain disulfide couples C1213 to C1219. A glycan (N-linked (GlcNAc...) asparagine) is linked at N1225. Disulfide bonds link C1232–C1279, C1240–C1283, C1251–C1264, C1287–C1325, C1298–C1302, C1335–C1340, C1351–C1407, C1358–C1411, C1369–C1388, C1415–C1459, C1426–C1430, and C1469–C1474. An N-linked (GlcNAc...) asparagine glycan is attached at N1276. Residue N1366 is glycosylated (N-linked (GlcNAc...) asparagine). N-linked (GlcNAc...) asparagine glycans are attached at residues N1500 and N1547. Positions 1570–1591 (DVKTSRAVHPTQPSSNPAGRGR) are disordered. The chain crosses the membrane as a helical span at residues 1608–1628 (VYGVAAGAFVLLIFIVSMIYL). Residues 1629-1657 (ACKKPKKPQRRQNNRLKPLTLAYDGDADM) lie on the Cytoplasmic side of the membrane.

In terms of processing, proteolytic cleavage in the extracellular region generates a 210 kDa soluble form. Post-translationally, extensively N-glycosylated. As to expression, detected on kidney podocytes along the glomerular capillary wall (at protein level).

The protein resides in the cell membrane. It localises to the cell projection. It is found in the secreted. Functionally, plays a role in actin cytoskeleton rearrangement. In terms of biological role, the soluble form promotes endothelial cell migration and filopodia formation during sprouting angiogenesis via a FAK-dependent mechanism. This is Thrombospondin type-1 domain-containing protein 7A (THSD7A) from Homo sapiens (Human).